The chain runs to 655 residues: Potassium voltage-gated channel subfamily A member 4 (655 aa).

Residues 1–306 lie on the Cytoplasmic side of the membrane; it reads MEVAMVSAES…LLFEYPESSS (306 aa). The interval 24-153 is disordered; it reads QARARERERL…SEEDHGDGCS (130 aa). Residues 36–50 show a composition bias toward low complexity; the sequence is SRAAAAAAVAAATAA. Positions 81 to 90 are enriched in basic and acidic residues; it reads GSREEEATRT. Positions 91–100 are enriched in basic residues; sequence EKKKKLHHRQ. At Ser123 the chain carries Phosphoserine. Acidic residues predominate over residues 123–138; the sequence is SEEEEDEEEEEEEEEE. Residues 139–150 show a composition bias toward basic and acidic residues; the sequence is GRFYYSEEDHGD. Residues 307–328 traverse the membrane as a helical segment; the sequence is PARGIAIVSVLVILISIVIFCL. At 329 to 372 the chain is on the extracellular side; sequence ETLPEFRDDRDLIMALSAGGHSRLLNDTSAPHLENSGHTIFNDP. Asn354 carries an N-linked (GlcNAc...) asparagine glycan. The chain crosses the membrane as a helical span at residues 373-394; it reads FFIVETVCIVWFSFEFVVRCFA. Residues 395 to 405 are Cytoplasmic-facing; sequence CPSQALFFKNI. The chain crosses the membrane as a helical span at residues 406–426; sequence MNIIDIVSILPYFITLGTDLA. The Extracellular portion of the chain corresponds to 427–441; it reads QQQGGGNGQQQQAMS. A helical; Voltage-sensor transmembrane segment spans residues 442–462; that stretch reads FAILRIIRLVRVFRIFKLSRH. At 463-477 the chain is on the cytoplasmic side; sequence SKGLQILGHTLRASM. An S4-S5 linker region spans residues 464-477; sequence KGLQILGHTLRASM. The helical transmembrane segment at 478–499 threads the bilayer; that stretch reads RELGLLIFFLFIGVILFSSAVY. Residues 500–513 are Extracellular-facing; it reads FAEADEPTTHFQSI. The segment at residues 514–525 is an intramembrane region (helical); sequence PDAFWWAVVTMT. The short motif at 526 to 531 is the Selectivity filter element; the sequence is TVGYGD. The stretch at 526-533 is an intramembrane region; it reads TVGYGDMK. Residues 534-540 lie on the Extracellular side of the membrane; it reads PITVGGK. Residues 541 to 569 form a helical membrane-spanning segment; sequence IVGSLCAIAGVLTIALPVPVIVSNFNYFY. Over 570–655 the chain is Cytoplasmic; the sequence is HRETENEEQT…SNAKAVETDV (86 aa). Ser601 carries the post-translational modification Phosphoserine; by PKA. Positions 631 to 642 are enriched in basic and acidic residues; that stretch reads CQGKGDDSETDK. The tract at residues 631–655 is disordered; the sequence is CQGKGDDSETDKNNCSNAKAVETDV. The short motif at 653–655 is the PDZ-binding element; the sequence is TDV.

This sequence belongs to the potassium channel family. A (Shaker) (TC 1.A.1.2) subfamily. Kv1.4/KCNA4 sub-subfamily. As to quaternary structure, homotetramer and heterotetramer of potassium channel proteins. Interacts with KCNAB1 and KCNAB2. Interacts with DLG1, DLG2 and DLG4 via their PDZ domains. Interacts with SIGMAR1. Part of a complex containing KCNA1, KCNAB1 and LGI1. Detected in a complex with KCNA1. Interacts with KCNA2. Interacts (via cytoplasmic N-terminal domain) with KCNRG. In terms of processing, N-glycosylated. In terms of tissue distribution, detected in brain (at protein level). Heart and brain.

The protein localises to the cell membrane. Its subcellular location is the cell projection. The protein resides in the axon. The enzyme catalyses K(+)(in) = K(+)(out). Its function is as follows. Voltage-gated potassium channel that mediates transmembrane potassium transport in excitable membranes. Forms tetrameric potassium-selective channels through which potassium ions pass in accordance with their electrochemical gradient. The channel alternates between opened and closed conformations in response to the voltage difference across the membrane. Can form functional homotetrameric channels and heterotetrameric channels that contain variable proportions of KCNA1, KCNA2, KCNA4, KCNA5, and possibly other family members as well; channel properties depend on the type of alpha subunits that are part of the channel. Channel properties are modulated by cytoplasmic beta subunits that regulate the subcellular location of the alpha subunits and promote rapid inactivation. In vivo, membranes probably contain a mixture of heteromeric potassium channel complexes, making it difficult to assign currents observed in intact tissues to any particular potassium channel family member. Homotetrameric KCNA4 forms a potassium channel that opens in response to membrane depolarization, followed by rapid spontaneous channel closure. Likewise, a heterotetrameric channel formed by KCNA1 and KCNA4 shows rapid inactivation. This Rattus norvegicus (Rat) protein is Potassium voltage-gated channel subfamily A member 4 (Kcna4).